We begin with the raw amino-acid sequence, 140 residues long: Large ribosomal subunit protein uL13 (140 aa).

The protein belongs to the universal ribosomal protein uL13 family. In terms of assembly, part of the 50S ribosomal subunit.

Functionally, this protein is one of the early assembly proteins of the 50S ribosomal subunit, although it is not seen to bind rRNA by itself. It is important during the early stages of 50S assembly. The polypeptide is Large ribosomal subunit protein uL13 (Nautilia profundicola (strain ATCC BAA-1463 / DSM 18972 / AmH)).